Reading from the N-terminus, the 642-residue chain is MNSVSFEDVAVNFTLEEWALLDSSQKKLYEDVMQETFKNLVCLGKKWEDQDIEDDHRNQGRNRRGHMVERLCESRKGSKCGETTSQMPNVNINKETSTGAKPHECSFCGKDFMHHSSLNRHMRSHIGQKPNEYQEYEKQPCKRKAVGKTFSYRHCVRKHERTHTGGKPYECKQCGKAFIYYQPFQRHERIHAGEKPYECKQCGKTFIYYQSFQKHAHTGKKPYECKQCGKTFICYQSFQRHERTHTGEKPYECKQCGKAFSCPTYFRTHERTHTGEKPYKCKECGKAFSFLSSFRRHKRTHSGEKPYECKECGKAFFYSASFQAHVITHTGARPYKCKECGKAFNSSNSCRVHERTHIGEKPYECKRCGKSFSWSISLRMHERTHTGEKPYECKQCHKTFSFSSSLREHETTHTGEKPYECKQCGKAFRFSSSLQRHERTHSAEKPYECKQCGKAFRCSSYFRIHERSHTGEKPYECKQCGKVFIRSSSFRLHERTHTGEKPYECKLCGKAFSFSSSLREHEKIHTGNKPFECKRCGKAFLRSSQIRLHERTHTGEKPYQCKQCGKAFISSSKFRMHERTHTGEKPYRCKQCGKAFRFSSSVRIHERSHTGEKPYECKQCGKAFISSSHFRLHERTHMGEKA.

The KRAB domain maps to 4 to 76 (VSFEDVAVNF…MVERLCESRK (73 aa)). Residues 77 to 99 (GSKCGETTSQMPNVNINKETSTG) form a disordered region. Polar residues predominate over residues 81–99 (GETTSQMPNVNINKETSTG). Residues 103-125 (HECSFCGKDFMHHSSLNRHMRSH) form a C2H2-type 1 zinc finger. The C2H2-type 2; degenerate zinc-finger motif lies at 141–163 (CKRKAVGKTFSYRHCVRKHERTH). Residues 169–191 (YECKQCGKAFIYYQPFQRHERIH) form a C2H2-type 3 zinc finger. The C2H2-type 4; atypical zinc-finger motif lies at 197–217 (YECKQCGKTFIYYQSFQKHAH). C2H2-type zinc fingers lie at residues 223-245 (YECKQCGKTFICYQSFQRHERTH), 251-273 (YECKQCGKAFSCPTYFRTHERTH), 279-301 (YKCKECGKAFSFLSSFRRHKRTH), 307-329 (YECKECGKAFFYSASFQAHVITH), 335-357 (YKCKECGKAFNSSNSCRVHERTH), 363-385 (YECKRCGKSFSWSISLRMHERTH), 391-413 (YECKQCHKTFSFSSSLREHETTH), 419-441 (YECKQCGKAFRFSSSLQRHERTH), 447-469 (YECKQCGKAFRCSSYFRIHERSH), 475-497 (YECKQCGKVFIRSSSFRLHERTH), 503-525 (YECKLCGKAFSFSSSLREHEKIH), 531-553 (FECKRCGKAFLRSSQIRLHERTH), 559-581 (YQCKQCGKAFISSSKFRMHERTH), 587-609 (YRCKQCGKAFRFSSSVRIHERSH), and 615-637 (YECKQCGKAFISSSHFRLHERTH).

It belongs to the krueppel C2H2-type zinc-finger protein family.

It is found in the nucleus. Its function is as follows. May be involved in transcriptional regulation. The chain is Zinc finger protein 14 (ZNF14) from Macaca fascicularis (Crab-eating macaque).